A 349-amino-acid polypeptide reads, in one-letter code: Phosphoribosylformylglycinamidine cyclo-ligase (349 aa).

It belongs to the AIR synthase family.

Its subcellular location is the cytoplasm. It carries out the reaction 2-formamido-N(1)-(5-O-phospho-beta-D-ribosyl)acetamidine + ATP = 5-amino-1-(5-phospho-beta-D-ribosyl)imidazole + ADP + phosphate + H(+). The protein operates within purine metabolism; IMP biosynthesis via de novo pathway; 5-amino-1-(5-phospho-D-ribosyl)imidazole from N(2)-formyl-N(1)-(5-phospho-D-ribosyl)glycinamide: step 2/2. In Psychrobacter arcticus (strain DSM 17307 / VKM B-2377 / 273-4), this protein is Phosphoribosylformylglycinamidine cyclo-ligase.